The following is a 292-amino-acid chain: Inositol oxygenase (292 aa).

Residues arginine 33 and 88-90 (DES) each bind substrate. Residues histidine 101, histidine 128, and aspartate 129 each coordinate Fe cation. Substrate-binding positions include lysine 132 and 149–150 (GD). The Fe cation site is built by histidine 201, histidine 227, and aspartate 260. 227 to 228 (HS) serves as a coordination point for substrate.

Belongs to the myo-inositol oxygenase family. Requires Fe cation as cofactor.

The protein localises to the cytoplasm. The catalysed reaction is myo-inositol + O2 = D-glucuronate + H2O + H(+). It functions in the pathway polyol metabolism; myo-inositol degradation into D-glucuronate; D-glucuronate from myo-inositol: step 1/1. The chain is Inositol oxygenase (miox) from Dictyostelium discoideum (Social amoeba).